A 118-amino-acid chain; its full sequence is Large ribosomal subunit protein uL18 (118 aa).

Belongs to the universal ribosomal protein uL18 family. In terms of assembly, part of the 50S ribosomal subunit; part of the 5S rRNA/L5/L18/L25 subcomplex. Contacts the 5S and 23S rRNAs.

In terms of biological role, this is one of the proteins that bind and probably mediate the attachment of the 5S RNA into the large ribosomal subunit, where it forms part of the central protuberance. The sequence is that of Large ribosomal subunit protein uL18 from Wolinella succinogenes (strain ATCC 29543 / DSM 1740 / CCUG 13145 / JCM 31913 / LMG 7466 / NCTC 11488 / FDC 602W) (Vibrio succinogenes).